A 182-amino-acid polypeptide reads, in one-letter code: UPF0254 protein MK0012 (182 aa).

Belongs to the UPF0254 family.

In Methanopyrus kandleri (strain AV19 / DSM 6324 / JCM 9639 / NBRC 100938), this protein is UPF0254 protein MK0012.